Reading from the N-terminus, the 714-residue chain is RB-associated KRAB zinc finger protein (714 aa).

In terms of domain architecture, KRAB spans valine 8 to proline 79. Glycyl lysine isopeptide (Lys-Gly) (interchain with G-Cter in SUMO2) cross-links involve residues lysine 97 and lysine 259. Residues threonine 171–proline 260 are required for interaction with RB1. 2 consecutive C2H2-type zinc fingers follow at residues phenylalanine 261–histidine 283 and tyrosine 289–histidine 311. Lysine 315 is covalently cross-linked (Glycyl lysine isopeptide (Lys-Gly) (interchain with G-Cter in SUMO2)). 7 consecutive C2H2-type zinc fingers follow at residues tyrosine 317–histidine 339, tyrosine 345–histidine 367, tyrosine 373–histidine 395, tyrosine 401–histidine 423, tyrosine 429–histidine 451, tyrosine 457–histidine 479, and histidine 485–histidine 505. A Glycyl lysine isopeptide (Lys-Gly) (interchain with G-Cter in SUMO2) cross-link involves residue lysine 357. The interval isoleucine 417 to leucine 714 is interaction with AR. The C2H2-type 10; degenerate zinc-finger motif lies at tyrosine 511–proline 533. Residues lysine 534 and lysine 537 each participate in a glycyl lysine isopeptide (Lys-Gly) (interchain with G-Cter in SUMO2) cross-link. 6 C2H2-type zinc fingers span residues tyrosine 539 to histidine 561, tyrosine 567 to histidine 589, tyrosine 595 to histidine 617, tyrosine 623 to histidine 645, tyrosine 651 to histidine 673, and tyrosine 679 to histidine 701.

It belongs to the krueppel C2H2-type zinc-finger protein family. In terms of assembly, interacts with AR and RB1. May also interact with other nuclear hormone receptors such as NR3C1/GR. Expressed in bone, brain, heart, kidney, liver, lung, pancreas and placenta.

The protein resides in the nucleus. Its function is as follows. May repress E2F-dependent transcription. May promote AR-dependent transcription. This chain is RB-associated KRAB zinc finger protein (RBAK), found in Homo sapiens (Human).